Reading from the N-terminus, the 292-residue chain is 6-phospho-5-dehydro-2-deoxy-D-gluconate aldolase (292 aa).

Asp85 functions as the Proton donor in the catalytic mechanism. Zn(2+) contacts are provided by His86 and His180. Position 181 (Gly181) interacts with dihydroxyacetone phosphate. Residue His208 coordinates Zn(2+). Dihydroxyacetone phosphate is bound by residues 209–211 (GAS) and 230–233 (NINT). Phosphothreonine is present on Thr233.

This sequence belongs to the class II fructose-bisphosphate aldolase family. IolJ subfamily. It depends on Zn(2+) as a cofactor.

It catalyses the reaction 6-phospho-5-dehydro-2-deoxy-D-gluconate = 3-oxopropanoate + dihydroxyacetone phosphate. It functions in the pathway polyol metabolism; myo-inositol degradation into acetyl-CoA; acetyl-CoA from myo-inositol: step 6/7. Produces dihydroxyacetone phosphate (DHAP or glycerone phosphate) and malonic semialdehyde (MSA or 3-oxopropanoate) from 6-phospho-5-dehydro-2-deoxy-D-gluconate (DKGP). This Bacillus licheniformis (strain ATCC 14580 / DSM 13 / JCM 2505 / CCUG 7422 / NBRC 12200 / NCIMB 9375 / NCTC 10341 / NRRL NRS-1264 / Gibson 46) protein is 6-phospho-5-dehydro-2-deoxy-D-gluconate aldolase (iolJ).